The following is a 368-amino-acid chain: 1-deoxy-D-xylulose 5-phosphate reductoisomerase (368 aa).

Residues T7, G8, S9, I10, G31, K32, N33, and N113 each coordinate NADPH. K114 contributes to the 1-deoxy-D-xylulose 5-phosphate binding site. E115 is an NADPH binding site. D133 is a Mn(2+) binding site. 1-deoxy-D-xylulose 5-phosphate contacts are provided by S134, E135, S158, and H181. Position 135 (E135) interacts with Mn(2+). G187 serves as a coordination point for NADPH. 4 residues coordinate 1-deoxy-D-xylulose 5-phosphate: S194, N199, K200, and E203. E203 serves as a coordination point for Mn(2+).

This sequence belongs to the DXR family. Mg(2+) is required as a cofactor. Mn(2+) serves as cofactor.

The enzyme catalyses 2-C-methyl-D-erythritol 4-phosphate + NADP(+) = 1-deoxy-D-xylulose 5-phosphate + NADPH + H(+). It functions in the pathway isoprenoid biosynthesis; isopentenyl diphosphate biosynthesis via DXP pathway; isopentenyl diphosphate from 1-deoxy-D-xylulose 5-phosphate: step 1/6. Its function is as follows. Catalyzes the NADPH-dependent rearrangement and reduction of 1-deoxy-D-xylulose-5-phosphate (DXP) to 2-C-methyl-D-erythritol 4-phosphate (MEP). The protein is 1-deoxy-D-xylulose 5-phosphate reductoisomerase of Helicobacter pylori (strain J99 / ATCC 700824) (Campylobacter pylori J99).